The primary structure comprises 207 residues: MTRTKKNPPLRVGVGGPVGSGKTTLLEMLCKAMRDRYDLVAITNDIYTKEDQRLLTISGALPAERIMGVETGGCPHTAIREDASINLEAVDRMLAKFPDADVVFIESGGDNLAATFSPELSDLTIYVIDVAGGEKIPRKGGPGITKSDLLVINKTDLAPYVGASLEIMESDARKMRGERPFVMGSVKSGQGLDQVIAFIERQGMLDV.

GTP is bound at residue 16 to 23; that stretch reads GPVGSGKT.

The protein belongs to the SIMIBI class G3E GTPase family. UreG subfamily. As to quaternary structure, homodimer. UreD, UreF and UreG form a complex that acts as a GTP-hydrolysis-dependent molecular chaperone, activating the urease apoprotein by helping to assemble the nickel containing metallocenter of UreC. The UreE protein probably delivers the nickel.

Its subcellular location is the cytoplasm. Its function is as follows. Facilitates the functional incorporation of the urease nickel metallocenter. This process requires GTP hydrolysis, probably effectuated by UreG. The chain is Urease accessory protein UreG from Cupriavidus metallidurans (strain ATCC 43123 / DSM 2839 / NBRC 102507 / CH34) (Ralstonia metallidurans).